Consider the following 146-residue polypeptide: Ferredoxin-type protein FwdE (146 aa).

4Fe-4S ferredoxin-type domains lie at 90–115 and 116–145; these read IKLFWDENSCIACGSCLGCAALTLDN and FTVGIDEDTCHLCASCIFRCPTNSLKFIKE. Positions 125, 128, 131, and 135 each coordinate [4Fe-4S] cluster.

[4Fe-4S] cluster is required as a cofactor.

The sequence is that of Ferredoxin-type protein FwdE (fwdE) from Methanocaldococcus jannaschii (strain ATCC 43067 / DSM 2661 / JAL-1 / JCM 10045 / NBRC 100440) (Methanococcus jannaschii).